The chain runs to 104 residues: L-rhamnose mutarotase (104 aa).

Substrate is bound at residue Tyr-18. Catalysis depends on His-22, which acts as the Proton donor. Substrate-binding positions include Tyr-41 and 76–77 (WW).

The protein belongs to the rhamnose mutarotase family. As to quaternary structure, homodimer.

The protein resides in the cytoplasm. It catalyses the reaction alpha-L-rhamnose = beta-L-rhamnose. The protein operates within carbohydrate metabolism; L-rhamnose metabolism. Its function is as follows. Involved in the anomeric conversion of L-rhamnose. The protein is L-rhamnose mutarotase of Listeria monocytogenes serotype 4b (strain F2365).